Consider the following 222-residue polypeptide: UPF0502 protein Lcho_2066 (222 aa).

It belongs to the UPF0502 family.

This chain is UPF0502 protein Lcho_2066, found in Leptothrix cholodnii (strain ATCC 51168 / LMG 8142 / SP-6) (Leptothrix discophora (strain SP-6)).